The following is a 153-amino-acid chain: Natriuretic peptides A (153 aa).

A signal peptide spans 1–25 (MGSFSTIMASFLLFLAFQLQGQTRA). 2 propeptides span residues 26-123 (NPVY…AAPR) and 93-103 (DGGALGRGSWD). The segment at 54–105 (EDEVMPPQVLSDQSEEERAALSPLPEVPPWTGEVNPAQRDGGALGRGSWDSS) is disordered. Ser129 is subject to Phosphoserine. A disulfide bridge connects residues Cys130 and Cys146. Residues 147 to 151 (NSFRY) form an important for degradation of atrial natriuretic peptide by IDE region.

It belongs to the natriuretic peptide family. In terms of assembly, homodimer; disulfide-linked antiparallel dimer. The precursor molecule is proteolytically cleaved by CORIN at Arg-123 to produce the atrial natriuretic peptide. Undergoes further proteolytic cleavage by unknown proteases to give rise to long-acting natriuretic peptide, vessel dilator and kaliuretic peptide. Additional processing gives rise to the auriculin and atriopeptin peptides. In the kidneys, alternative processing by an unknown protease results in the peptide urodilatin. In terms of processing, cleavage by MME initiates degradation of the factor and thereby regulates its activity. Degradation by IDE results in reduced activation of NPR1 (in vitro). During IDE degradation, the resulting products can temporarily stimulate NPR2 to produce cGMP, before the fragments are completely degraded and inactivated by IDE (in vitro). Post-translationally, degraded by IDE. Phosphorylation on Ser-129 decreases vasorelaxant activity.

The protein resides in the secreted. It localises to the perikaryon. The protein localises to the cell projection. Functionally, hormone that plays a key role in mediating cardio-renal homeostasis, and is involved in vascular remodeling and regulating energy metabolism. Acts by specifically binding and stimulating NPR1 to produce cGMP, which in turn activates effector proteins, such as PRKG1, that drive various biological responses. Regulates vasodilation, natriuresis, diuresis and aldosterone synthesis and is therefore essential for regulating blood pressure, controlling the extracellular fluid volume and maintaining the fluid-electrolyte balance. Also involved in inhibiting cardiac remodeling and cardiac hypertrophy by inducing cardiomyocyte apoptosis and attenuating the growth of cardiomyocytes and fibroblasts. Plays a role in female pregnancy by promoting trophoblast invasion and spiral artery remodeling in uterus, and thus prevents pregnancy-induced hypertension. In adipose tissue, acts in various cGMP- and PKG-dependent pathways to regulate lipid metabolism and energy homeostasis. This includes up-regulating lipid metabolism and mitochondrial oxygen utilization by activating the AMP-activated protein kinase (AMPK), and increasing energy expenditure by acting via MAPK11 to promote the UCP1-dependent thermogenesis of brown adipose tissue. Binds the clearance receptor NPR3 which removes the hormone from circulation. In terms of biological role, may have a role in cardio-renal homeostasis through regulation of natriuresis, diuresis, vasodilation, and inhibiting aldosterone synthesis. In vitro, promotes the production of cGMP and induces vasodilation. May promote natriuresis, at least in part, by enhancing prostaglandin E2 synthesis resulting in the inhibition of renal Na+-K+-ATPase. However reports on the involvement of this peptide in mammal blood volume and blood pressure homeostasis are conflicting; according to a report, in vivo it is not sufficient to activate cGMP and does not inhibit collecting duct transport nor effect diuresis and natriuresis. Appears to bind to specific receptors that are distinct from the receptors bound by atrial natriuretic peptide and vessel dilator. Possibly enhances protein excretion in urine by decreasing proximal tubular protein reabsorption. Its function is as follows. May have a role in cardio-renal homeostasis through regulation of natriuresis, diuresis, and vasodilation. In vitro, promotes the production of cGMP and induces vasodilation. May promote natriuresis, at least in part, by enhancing prostaglandin E2 synthesis resulting in the inhibition of renal Na+-K+-ATPase. However reports on the involvement of this peptide in mammal blood volume and blood pressure homeostasis are conflicting; according to a report it is not sufficient to activate cGMP and does not inhibit collecting duct transport nor effect diuresis and natriuresis. Appears to bind to specific receptors that are distinct from the receptors bound by the atrial natriuretic and long-acting natriuretic peptides. Possibly functions in protein excretion in urine by maintaining the integrity of the proximal tubules and enhancing protein excretion by decreasing proximal tubular protein reabsorption. May have a role in cardio-renal homeostasis through regulation of diuresis and inhibiting aldosterone synthesis. In vitro, promotes the production of cGMP and induces vasodilation. May promote natriuresis, at least in part, by enhancing prostaglandin E2 synthesis resulting in the inhibition of renal Na+-K+-ATPase. May have a role in potassium excretion but not sodium excretion (natriuresis). Possibly enhances protein excretion in urine by decreasing proximal tubular protein reabsorption. Functionally, hormone produced in the kidneys that appears to be important for maintaining cardio-renal homeostasis. Mediates vasodilation, natriuresis and diuresis primarily in the renal system, in order to maintain the extracellular fluid volume and control the fluid-electrolyte balance. Specifically binds and stimulates cGMP production by renal transmembrane receptors, likely NPR1. Urodilatin not ANP, may be the natriuretic peptide responsible for the regulation of sodium and water homeostasis in the kidney. In terms of biological role, may have a role in cardio-renal homeostasis through regulation of natriuresis and vasodilation. In vivo promotes natriuresis and in vitro, vasodilates renal artery strips. Its function is as follows. May have a role in cardio-renal homeostasis through regulation of regulation of natriuresis and vasodilation. In vivo promotes natriuresis. In vitro, vasodilates intestinal smooth muscle but not smooth muscle strips. May have a role in cardio-renal homeostasis through regulation of natriuresis and vasodilation. In vivo promotes natriuresis. In vitro, selectively vasodilates intestinal and vascular smooth muscle strips. Functionally, may have a role in cardio-renal homeostasis through regulation of natriuresis and vasodilation. In vivo promotes natriuresis. In vitro, selectively vasodilates intestinal smooth muscle but not vascular smooth muscle strips. The sequence is that of Natriuretic peptides A (NPPA) from Equus caballus (Horse).